The chain runs to 267 residues: MLKIGVVGCGAIASLITKALMSDRLNKAEVLAFYDGNLEKAEKLAMETGADFCRSLDELVSKDLDLIVECASVTAVEDTVIKSLNNDKDVIVMSVGAFADKDLFLKLYKLAEKLGRKIYIPSGAIAGIDAVKSGSLGKISEVTLTTTKPVHGLKSALEEQGLNTDDIMDPKVVFEGTVFEAISKFPQNINVSVVLSLASKYPAKVKIIADPNLMVNRHEILVKGSIGTIKTCVENNPCKDNPKTSALAAYSAIQLIKDLSEPVRIGT.

The NAD(+) site is built by alanine 124 and asparagine 190. The active site involves histidine 218.

Belongs to the L-aspartate dehydrogenase family.

It carries out the reaction L-aspartate + NADP(+) + H2O = oxaloacetate + NH4(+) + NADPH + H(+). It catalyses the reaction L-aspartate + NAD(+) + H2O = oxaloacetate + NH4(+) + NADH + H(+). The protein operates within cofactor biosynthesis; NAD(+) biosynthesis; iminoaspartate from L-aspartate (dehydrogenase route): step 1/1. Functionally, specifically catalyzes the NAD or NADP-dependent dehydrogenation of L-aspartate to iminoaspartate. The chain is L-aspartate dehydrogenase from Methanococcus maripaludis (strain C7 / ATCC BAA-1331).